Here is a 221-residue protein sequence, read N- to C-terminus: Orotidine 5'-phosphate decarboxylase (221 aa).

Substrate contacts are provided by residues Asp12, Lys34, 60 to 69 (DFKVADIPNT), Ser117, 170 to 180 (PGVGAQGGKAS), Gly193, and Arg194. Lys62 serves as the catalytic Proton donor.

Belongs to the OMP decarboxylase family. Type 1 subfamily. Homodimer.

It catalyses the reaction orotidine 5'-phosphate + H(+) = UMP + CO2. It functions in the pathway pyrimidine metabolism; UMP biosynthesis via de novo pathway; UMP from orotate: step 2/2. Functionally, catalyzes the decarboxylation of orotidine 5'-monophosphate (OMP) to uridine 5'-monophosphate (UMP). The polypeptide is Orotidine 5'-phosphate decarboxylase (Methanosarcina acetivorans (strain ATCC 35395 / DSM 2834 / JCM 12185 / C2A)).